The sequence spans 417 residues: Serine hydroxymethyltransferase (417 aa).

Residues Leu-121 and 125-127 (GHL) each bind (6S)-5,6,7,8-tetrahydrofolate. Lys-229 bears the N6-(pyridoxal phosphate)lysine mark. 355-357 (SPF) lines the (6S)-5,6,7,8-tetrahydrofolate pocket.

This sequence belongs to the SHMT family. In terms of assembly, homodimer. It depends on pyridoxal 5'-phosphate as a cofactor.

It is found in the cytoplasm. It carries out the reaction (6R)-5,10-methylene-5,6,7,8-tetrahydrofolate + glycine + H2O = (6S)-5,6,7,8-tetrahydrofolate + L-serine. It participates in one-carbon metabolism; tetrahydrofolate interconversion. Its pathway is amino-acid biosynthesis; glycine biosynthesis; glycine from L-serine: step 1/1. Its function is as follows. Catalyzes the reversible interconversion of serine and glycine with tetrahydrofolate (THF) serving as the one-carbon carrier. This reaction serves as the major source of one-carbon groups required for the biosynthesis of purines, thymidylate, methionine, and other important biomolecules. Also exhibits THF-independent aldolase activity toward beta-hydroxyamino acids, producing glycine and aldehydes, via a retro-aldol mechanism. The polypeptide is Serine hydroxymethyltransferase (Buchnera aphidicola subsp. Acyrthosiphon pisum (strain APS) (Acyrthosiphon pisum symbiotic bacterium)).